The chain runs to 24 residues: Protein YsdE (24 aa).

The chain is Protein YsdE from Escherichia coli (strain K12).